The primary structure comprises 344 residues: L-rhamnose-proton symporter (344 aa).

Helical transmembrane passes span 4 to 24, 38 to 58, 68 to 88, 101 to 121, 137 to 157, 175 to 195, 214 to 234, 259 to 279, 290 to 310, and 323 to 343; these read AITMGIFWHLIGAASAACFYA, WSIGGIVSWLILPWTISALLL, FNLSTLLPVFLFGAMWGIGNI, MGIGIAIGITLIVGTLMTPII, TLLGVLVALIGVGIVTRAGQL, LLLAVMCGIFSAGMSFAMNAA, LPSYVVIMGGGALINLGFCFV, ILLSALGGLMWYLQFFFYAWG, ISWMLHMSFYVLCGGIVGLVL, and VLSLGCVVIIIAANIVGMGMA.

This sequence belongs to the L-rhamnose transporter (TC 2.A.7.6) family.

Its subcellular location is the cell inner membrane. The enzyme catalyses L-rhamnopyranose(in) + H(+)(in) = L-rhamnopyranose(out) + H(+)(out). Functionally, uptake of L-rhamnose across the cytoplasmic membrane with the concomitant transport of protons into the cell (symport system). The polypeptide is L-rhamnose-proton symporter (Citrobacter koseri (strain ATCC BAA-895 / CDC 4225-83 / SGSC4696)).